The chain runs to 349 residues: MQTYGNPDVTYGWWAGNAGVTNKSGKFIAAHIAHTGLIAFAAGGSTLWELARYNPEIPMGHQSSIFLAHLASIGIGFDEAGAWTGAGVASIAIVHLVLSMVYGAGGLLHSVLFVGDMQDSEVPQARKFKLEWDNPDNQTFILGHHLLFFGVACIWFVEWARIHGIYDPAIGAVRQVEYNLNLTSIWNHQFDFLAIDSLEDVLGGHAFLAFLEITGGAFHIATKQVGEYTKFKGAGLLSAEAILSFSCAGLGWMAVVAAFWCAQNTTVYPEAWYGEALILKFGIAPYWIDSVDLSGGPAFFGHTTRAALANVHYYFGFFFLQGHLWHALRAMGFDFKRILKEPLPAQLYE.

Transmembrane regions (helical) follow at residues 27-47 (FIAA…GSTL), 65-85 (IFLA…AWTG), 88-108 (VASI…GGLL), 201-221 (VLGG…FHIA), 241-261 (AILS…AFWC), and 308-328 (LANV…WHAL).

This sequence belongs to the PsbB/PsbC family. IsiA/Pcb subfamily. In terms of assembly, the antenna complex consists of divinyl chlorophylls (a and b) and divinyl chlorophyll a/b binding proteins and binds more divinyl chlorophyll b than does the antenna complex from high-light-adapted Prochlorococcus. Requires divinyl chlorophyll a as cofactor. Divinyl chlorophyll b serves as cofactor.

It is found in the cellular thylakoid membrane. Functionally, the antenna complex functions as a light receptor, it captures and delivers excitation energy to photosystems II and I. The Prochlorales pcb genes are not related to higher plant LHCs. In Prochlorococcus marinus (strain NATL2A), this protein is Divinyl chlorophyll a/b light-harvesting protein PcbE (pcbE).